Reading from the N-terminus, the 445-residue chain is Argininosuccinate lyase (445 aa).

This sequence belongs to the lyase 1 family. Argininosuccinate lyase subfamily.

The protein localises to the cytoplasm. The catalysed reaction is 2-(N(omega)-L-arginino)succinate = fumarate + L-arginine. The protein operates within amino-acid biosynthesis; L-arginine biosynthesis; L-arginine from L-ornithine and carbamoyl phosphate: step 3/3. This chain is Argininosuccinate lyase, found in Xylella fastidiosa (strain Temecula1 / ATCC 700964).